Reading from the N-terminus, the 435-residue chain is Cell adhesion molecule 2 (435 aa).

An N-terminal signal peptide occupies residues 1–24 (MIWKRSAVLRFYSVCGLLLQGSQG). Residues 25-367 (QFPLTQNVTV…ALAGQNGPDH (343 aa)) lie on the Extracellular side of the membrane. The region spanning 27-119 (PLTQNVTVVE…PVKTSKAYLT (93 aa)) is the Ig-like V-type domain. 2 N-linked (GlcNAc...) asparagine glycosylation sites follow: asparagine 31 and asparagine 51. Disulfide bonds link cysteine 44–cysteine 104, cysteine 146–cysteine 203, and cysteine 248–cysteine 296. 2 Ig-like C2-type domains span residues 127–219 (PQIS…VAMQ) and 227–312 (PSVK…YVLI). Asparagine 291 is a glycosylation site (N-linked (GlcNAc...) asparagine). The chain crosses the membrane as a helical span at residues 368 to 388 (ALIGGIVAVVVFVTLCSIFLL). Over 389–435 (GRYLARHKGTYLTNEAKGAEDAPDADTAIINAEGSQVNAEEKKEYFI) the chain is Cytoplasmic. Serine 423 carries the phosphoserine modification.

The protein belongs to the nectin family.

The protein resides in the cell membrane. It localises to the synapse. The protein localises to the cell projection. It is found in the axon. In terms of biological role, adhesion molecule that engages in homo- and heterophilic interactions with the other nectin-like family members, leading to cell aggregation. Important for synapse organization, providing regulated trans-synaptic adhesion. Preferentially binds to oligodendrocytes. Functionally, (Microbial infection) Induces cell fusion in neuron infected by a neuropathogenic strain of measles. Interacts with measles hemagglutinin to trigger hyperfusogenic F-mediated membrane fusion and presumably transsynaptic cell-to-cell transmission of the virus. The chain is Cell adhesion molecule 2 (CADM2) from Homo sapiens (Human).